Here is a 341-residue protein sequence, read N- to C-terminus: MKAHFGVTVWLGVCCSMTLLMVVIGGITRLTHSGLSITEWQPIVGVVPPIGDEAWLREKEKYAQTPEYRHRAADISLDDFKRIYIIEYIHRLFGRALGAVFCLPIPYFAITKRINRAMVAKLLMVALLGGMQGAMGWFMVKSGLVDTPRVSHYRLAGHLFLTILLFSILWHSFLRCAGVRSTTTTTNARFFTAAAVVGLTVLQMVLGALVAGLDAGLTYNTFPLMDGAIIPQSLFSAKLWHGGFLHDVTAVQFLHRLVAVLIVVCAAPLPFWLKTRGAWLFLACVALQFLLGVATLVSVVHIFLAAMHQVFGFVTLAAGVHMLCRLRREGSTCISGHAGIS.

The next 8 membrane-spanning stretches (helical) occupy residues 7–27, 92–112, 118–138, 159–179, 190–210, 253–273, 280–300, and 302–322; these read VTVW…IGGI, LFGR…AITK, MVAK…MGWF, LFLT…CAGV, FFTA…GALV, FLHR…PFWL, LFLA…VSVV, and IFLA…GVHM. Histidine 255 is a binding site for heme. Heme is bound at residue histidine 308.

The protein belongs to the COX15/CtaA family. Type 2 subfamily. In terms of assembly, interacts with CtaB. The cofactor is heme b.

The protein resides in the cell membrane. The catalysed reaction is Fe(II)-heme o + 2 A + H2O = Fe(II)-heme a + 2 AH2. It participates in porphyrin-containing compound metabolism; heme A biosynthesis; heme A from heme O: step 1/1. In terms of biological role, catalyzes the conversion of heme O to heme A by two successive hydroxylations of the methyl group at C8. The first hydroxylation forms heme I, the second hydroxylation results in an unstable dihydroxymethyl group, which spontaneously dehydrates, resulting in the formyl group of heme A. The chain is Heme A synthase from Anaplasma marginale (strain Florida).